The sequence spans 348 residues: Uroporphyrinogen decarboxylase (348 aa).

Substrate contacts are provided by residues 27 to 31, Phe46, Asp76, Tyr152, Ser207, and His320; that span reads RQAGR.

Belongs to the uroporphyrinogen decarboxylase family. In terms of assembly, homodimer.

Its subcellular location is the cytoplasm. The catalysed reaction is uroporphyrinogen III + 4 H(+) = coproporphyrinogen III + 4 CO2. It functions in the pathway porphyrin-containing compound metabolism; protoporphyrin-IX biosynthesis; coproporphyrinogen-III from 5-aminolevulinate: step 4/4. Functionally, catalyzes the decarboxylation of four acetate groups of uroporphyrinogen-III to yield coproporphyrinogen-III. The chain is Uroporphyrinogen decarboxylase from Bacillus cereus (strain B4264).